The sequence spans 445 residues: Mitochondrial-processing peptidase subunit alpha-2 (445 aa).

The N-terminal 13 residues, 1 to 13 (MIGRFIARNYTTS), are a transit peptide targeting the mitochondrion.

Belongs to the peptidase M16 family. Heterodimer of alpha and beta subunits, forming the mitochondrial processing protease (MPP) in which subunit alpha is involved in substrate recognition and binding and subunit beta is the catalytic subunit.

It localises to the mitochondrion matrix. Functionally, substrate recognition and binding subunit of the essential mitochondrial processing protease (MPP), which cleaves the mitochondrial sequence off newly imported precursors proteins. In Dictyostelium discoideum (Social amoeba), this protein is Mitochondrial-processing peptidase subunit alpha-2 (mppA2).